The sequence spans 198 residues: Snake venom metalloproteinase BpirMP (198 aa).

A Peptidase M12B domain is found at 1–197; sequence TYIEVAVVAD…HNPQCILNEP (197 aa). The Ca(2+) site is built by Glu4 and Asp88. 3 disulfides stabilise this stretch: Cys112/Cys192, Cys152/Cys176, and Cys154/Cys159. Zn(2+) is bound at residue His137. Residue Glu138 is part of the active site. Zn(2+)-binding residues include His141 and His147. Ca(2+)-binding residues include Cys192 and Asn195.

This sequence belongs to the venom metalloproteinase (M12B) family. P-I subfamily. Monomer. Zn(2+) serves as cofactor. As to expression, expressed by the venom gland.

It localises to the secreted. Inhibited by the chelating agents EDTA, EGTA and 1,10-phenanthroline. Is not inhibited by serine proteinase inhibitors aprotinin, leupeptin and benzamidine. Zinc metalloprotease that preferentially degrades Aalpha chain of fibrinogen (FGA) (at a dose of 5 ug, whereas at a dose of 10 ug, both FGA and FGB are completely degraded). Degrades fibrin gel in a dose-dependent manner, as well blood clots formed in vitro (thrombolytic activity). Induces hemorrhage (in the dorsal skin of mice), with an MHD of 50 ug. The basal membrane components collagen (all chains of type IV) (COL4A4), fibronectin (FN1), laminin and nidogen are all degraded by this toxin. The protein is Snake venom metalloproteinase BpirMP of Bothrops pirajai (Piraja's lancehead).